A 1102-amino-acid polypeptide reads, in one-letter code: MPQSQVATASPSQNAQPNHGMGSKVLSSDPNASLPPQTAYYASPLHANSVSLPPSHLPRSTLHPLLSQQQQPAQQSPSLGPAQQNIQQPPSVSIASQPHYAEAIVPIQQVLQPQQYRQLPPNMVAATNAPQQHPQLQRMMPILSSNQPIQQLPLPNQASPYIPVPLQQQQQSQPQQQPQQQQHQQPQQPQPPQQPLQQQQQQRQLHSGIQQPVSTIVSQNGTYYSIPAVNHPMAGQPIAIAPVPAPNQAALPPIPPQALPANGTPNTLASPVTLPAANSAVQNAQPVPMTSSPAMAVVPQNKTAATSTLAAQQGANVLPPNAPESVRHLISLNEETWIQIGRLAELFDDQDKALSAYESALRQNPYSIPAMLQIATILRNREQFPLAIEYYQTILDCDPKQGEIWSALGHCYLMQDDLSRAYSAYRQALYHLKDPKDPKLWYGIGILYDRYGSHEHAEEAFMQCLRMDPNFEKVNEIYFRLGIIYKQQHKFAQSLELFRHILDNPPKPLTVLDIYFQIGHVYEQRKEYKLAKEAYERVLAETPNHAKVLQQLGWLCHQQSSSFTNQDLAIQYLTKSLEADDTDAQSWYLIGRCYVAQQKYNKAYEAYQQAVYRDGRNPTFWCSIGVLYYQINQYQDALDAYSRAIRLNPYISEVWYDLGTLYESCHNQISDALDAYQRAAELDPTNPHIKARLQLLRGPNNEQHKIVNAPPSNVPNVQTAKYINQPGVPYSNVPVAQLSGNWQPPHLPQAQLPSATGQSGVVQQPYQTQPSVTNNNVATQPVIASTVPVQTAAPSSQTAVPQTIHQSNAFTPRGKHASGSRNSISSTKSPQHKLSDQPRSRNNSISNVSHRERSNSVSSKSRETRTSASNESDPKKSTQRDSSKKLENSTVVSGSPSSSSKSDAAKSIKPQKPEPALKPVEGTADPKSTKRNHQETEKTADTDVSSTEPVKRQKTADVNDDVGEEEVKQSVSEQVDSAQLTSEPKSESLPKSPEEKSDDTSNDVTTENTNDINGDSNMDNVATVDKSTDAVDTSTATVAATTTTAEEELPQKESQERSSPSPENQDSTPLAPKSVSPKQAARTLDIDENYDDDEGEKETVSV.

Composition is skewed to polar residues over residues 1 to 17 (MPQSQVATASPSQNAQP) and 25 to 36 (VLSSDPNASLPP). 2 disordered regions span residues 1 to 94 (MPQS…SVSI) and 166 to 209 (LQQQ…HSGI). Residues 64–84 (PLLSQQQQPAQQSPSLGPAQQ) show a composition bias toward low complexity. Positions 85 to 94 (NIQQPPSVSI) are enriched in polar residues. Low complexity-rich tracts occupy residues 166 to 187 (LQQQQQSQPQQQPQQQQHQQPQ) and 195 to 205 (PLQQQQQQRQL). TPR repeat units follow at residues 334 to 367 (EETWIQIGRLAELFDDQDKALSAYESALRQNPYS), 368 to 401 (IPAMLQIATILRNREQFPLAIEYYQTILDCDPKQ), 402 to 435 (GEIWSALGHCYLMQDDLSRAYSAYRQALYHLKDP), 438 to 471 (PKLWYGIGILYDRYGSHEHAEEAFMQCLRMDPNF), 475 to 508 (NEIYFRLGIIYKQQHKFAQSLELFRHILDNPPKP), 512 to 545 (LDIYFQIGHVYEQRKEYKLAKEAYERVLAETPNH), 584 to 617 (AQSWYLIGRCYVAQQKYNKAYEAYQQAVYRDGRN), 618 to 651 (PTFWCSIGVLYYQINQYQDALDAYSRAIRLNPYI), and 652 to 686 (SEVWYDLGTLYESCHNQISDALDAYQRAAELDPTN). 2 disordered regions span residues 739–764 (SGNWQPPHLPQAQLPSATGQSGVVQQ) and 808–1102 (NAFT…TVSV). Composition is skewed to polar residues over residues 751–764 (QLPSATGQSGVVQQ) and 819–829 (GSRNSISSTKS). Composition is skewed to basic and acidic residues over residues 849-865 (SHRERSNSVSSKSRETR) and 872-887 (SDPKKSTQRDSSKKLE). A compositionally biased stretch (low complexity) spans 889-907 (STVVSGSPSSSSKSDAAKS). A phosphoserine mark is found at serine 893, serine 895, serine 897, and serine 898. Basic and acidic residues-rich tracts occupy residues 932 to 941 (NHQETEKTAD) and 984 to 999 (PKSESLPKSPEEKSDD). Serine 992 carries the post-translational modification Phosphoserine. Over residues 1002 to 1020 (NDVTTENTNDINGDSNMDN) the composition is skewed to polar residues. Positions 1021 to 1044 (VATVDKSTDAVDTSTATVAATTTT) are enriched in low complexity. Positions 1057–1068 (RSSPSPENQDST) are enriched in polar residues. Phosphoserine is present on residues serine 1059 and serine 1061. Residues 1086–1096 (IDENYDDDEGE) show a composition bias toward acidic residues.

Belongs to the CYC8/SSN6 family. Associates independently with tup11 and tup12 to form ssn6-tup corepressor complexes.

Its subcellular location is the cytoplasm. It is found in the nucleus. In terms of biological role, acts as a component of the ssn6-tup corepressor complexes, which are involved in the repression of many genes in a wide variety of physiological processes. May also be involved in the derepression of at least some target genes. The complex is recruited to target genes by interaction with DNA-bound transcriptional repressors. The complex recruits histone deacetylases to produce a repressive chromatin structure, interacts with hypoacetylated N-terminal tails of histones H3 and H4 that have been programmed for repression by the action of histone deacetylases and interferes directly with the transcriptional machinery by associating with the RNA polymerase II mediator complex. In Schizosaccharomyces pombe (strain 972 / ATCC 24843) (Fission yeast), this protein is General transcriptional corepressor ssn6 (ssn6).